Reading from the N-terminus, the 75-residue chain is Small ribosomal subunit protein bS18 (75 aa).

The protein belongs to the bacterial ribosomal protein bS18 family. As to quaternary structure, part of the 30S ribosomal subunit. Forms a tight heterodimer with protein bS6.

Binds as a heterodimer with protein bS6 to the central domain of the 16S rRNA, where it helps stabilize the platform of the 30S subunit. This is Small ribosomal subunit protein bS18 from Glaesserella parasuis serovar 5 (strain SH0165) (Haemophilus parasuis).